The following is a 474-amino-acid chain: PRAME family member 13 (474 aa).

One copy of the LRR 1; degenerate repeat lies at 97-124 (RRKLQVLDLRDVDENFWARWPGAWALSC). The stretch at 179 to 203 (HLCCSKLVNYLTPIKHLRKSLKIIY) is one LRR 2; degenerate repeat. The stretch at 204–230 (LNSIQELEIHNMSWPRLIRKLRCYLKE) is one LRR 3; degenerate repeat. Residues 231-265 (MKTLGKLVFSRCHHSTSDNELEGRLVTKFSSVFLG) form an LRR 4; degenerate repeat. LRR repeat units lie at residues 266 to 291 (LEHL…IRCL), 292 to 323 (QNPL…GYLK), 324 to 342 (HLNL…PLGA), 348 to 375 (AASL…GLSR), and 376 to 400 (CSQL…LLRH).

This sequence belongs to the PRAME family.

The polypeptide is PRAME family member 13 (Homo sapiens (Human)).